The primary structure comprises 209 residues: uncharacterized protein (209 aa).

Over residues 1–15 the composition is skewed to basic and acidic residues; it reads MHRIDTKTAQKDKFG. Positions 1–34 are disordered; it reads MHRIDTKTAQKDKFGAGKNGFTRGNPQTGTPATD. Positions 22 to 31 are enriched in polar residues; that stretch reads TRGNPQTGTP.

It to E.coli YfdL and M.jannaschii MJ0347.

This is an uncharacterized protein from Escherichia coli (strain K12).